The sequence spans 103 residues: Large ribosomal subunit protein uL24 (103 aa).

The protein belongs to the universal ribosomal protein uL24 family. As to quaternary structure, part of the 50S ribosomal subunit.

Its function is as follows. One of two assembly initiator proteins, it binds directly to the 5'-end of the 23S rRNA, where it nucleates assembly of the 50S subunit. Functionally, one of the proteins that surrounds the polypeptide exit tunnel on the outside of the subunit. The chain is Large ribosomal subunit protein uL24 from Dehalococcoides mccartyi (strain ATCC BAA-2266 / KCTC 15142 / 195) (Dehalococcoides ethenogenes (strain 195)).